We begin with the raw amino-acid sequence, 483 residues long: Low-density lipoprotein receptor-related protein 11 (483 aa).

A signal peptide spans methionine 1–proline 32. Residues glycine 33–glycine 433 lie on the Extracellular side of the membrane. The MANSC domain occupies alanine 85–tyrosine 172. 2 N-linked (GlcNAc...) asparagine glycosylation sites follow: asparagine 152 and asparagine 275. The region spanning proline 193–threonine 287 is the PKD domain. The LDL-receptor class A domain maps to alanine 293–glutamine 329. 3 disulfides stabilise this stretch: cysteine 294-cysteine 306, cysteine 301-cysteine 319, and cysteine 313-cysteine 328. Residues alanine 346–proline 428 are disordered. Composition is skewed to polar residues over residues arginine 367–threonine 376 and histidine 385–lysine 407. Asparagine 403 carries N-linked (GlcNAc...) asparagine glycosylation. Over residues asparagine 408–serine 418 the composition is skewed to basic and acidic residues. Residues alanine 434–leucine 456 traverse the membrane as a helical segment. Residues arginine 457–leucine 483 lie on the Cytoplasmic side of the membrane. Serine 474 is modified (phosphoserine).

Belongs to the LDLR family.

The protein resides in the membrane. This Mus musculus (Mouse) protein is Low-density lipoprotein receptor-related protein 11 (Lrp11).